Consider the following 350-residue polypeptide: Small ribosomal subunit biogenesis GTPase RsgA (350 aa).

The span at 1-17 (MSKNKLSKGQQRRVNAN) shows a compositional bias: polar residues. Residues 1–33 (MSKNKLSKGQQRRVNANHQRRLKTSKEKPDYDD) form a disordered region. In terms of domain architecture, CP-type G spans 104–273 (TSVLTRPDFY…VIDSPGVREF (170 aa)). Residues 160–163 (NKID) and 214–222 (GQSGVGKSS) each bind GTP. The Zn(2+) site is built by Cys-297, Cys-302, His-304, and Cys-310.

Belongs to the TRAFAC class YlqF/YawG GTPase family. RsgA subfamily. Monomer. Associates with 30S ribosomal subunit, binds 16S rRNA. The cofactor is Zn(2+).

The protein resides in the cytoplasm. Functionally, one of several proteins that assist in the late maturation steps of the functional core of the 30S ribosomal subunit. Helps release RbfA from mature subunits. May play a role in the assembly of ribosomal proteins into the subunit. Circularly permuted GTPase that catalyzes slow GTP hydrolysis, GTPase activity is stimulated by the 30S ribosomal subunit. The chain is Small ribosomal subunit biogenesis GTPase RsgA from Escherichia coli (strain ATCC 8739 / DSM 1576 / NBRC 3972 / NCIMB 8545 / WDCM 00012 / Crooks).